The chain runs to 408 residues: LL-diaminopimelate aminotransferase (408 aa).

The substrate site is built by tyrosine 15 and glycine 42. Pyridoxal 5'-phosphate-binding positions include tyrosine 72, 108 to 109 (SK), tyrosine 132, asparagine 187, tyrosine 218, and 246 to 248 (SFS). Residues lysine 109, tyrosine 132, and asparagine 187 each contribute to the substrate site. Residue lysine 249 is modified to N6-(pyridoxal phosphate)lysine. Residues arginine 257 and asparagine 292 each contribute to the pyridoxal 5'-phosphate site. 2 residues coordinate substrate: asparagine 292 and arginine 388.

The protein belongs to the class-I pyridoxal-phosphate-dependent aminotransferase family. LL-diaminopimelate aminotransferase subfamily. In terms of assembly, homodimer. The cofactor is pyridoxal 5'-phosphate.

The enzyme catalyses (2S,6S)-2,6-diaminopimelate + 2-oxoglutarate = (S)-2,3,4,5-tetrahydrodipicolinate + L-glutamate + H2O + H(+). The protein operates within amino-acid biosynthesis; L-lysine biosynthesis via DAP pathway; LL-2,6-diaminopimelate from (S)-tetrahydrodipicolinate (aminotransferase route): step 1/1. In terms of biological role, involved in the synthesis of meso-diaminopimelate (m-DAP or DL-DAP), required for both lysine and peptidoglycan biosynthesis. Catalyzes the direct conversion of tetrahydrodipicolinate to LL-diaminopimelate. This chain is LL-diaminopimelate aminotransferase, found in Synechococcus sp. (strain CC9902).